Here is a 495-residue protein sequence, read N- to C-terminus: Cyclic GMP-AMP synthase (495 aa).

Residues 1–128 (MAARRGKSTR…AGATELAAPA (128 aa)) are disordered. A DNA-binding region spans residues 1–134 (MAARRGKSTR…AAPARMEAPP (134 aa)). Lys-7 carries the N6-acetyllysine modification. Position 13 is a phosphoserine (Ser-13). Basic and acidic residues-rich tracts occupy residues 52-76 (CRRE…RAED) and 105-116 (RAREARSARELR). Lys-56 carries the post-translational modification N6-acetyllysine. Ser-57 bears the Phosphoserine mark. The required for association with the cell membrane stretch occupies residues 57–68 (SGPDPREKPQVR). Positions 103-134 (SCRAREARSARELRPQAGATELAAPARMEAPP) are required for activation upon DNA viral infection. Positions 143–148 (LEKVRL) match the Nuclear export signal motif. Lys-145 carries the N6-lactoyllysine modification. A DNA-binding region spans residues 147 to 190 (RLSRHEISEAAEVVNWVVEHLLRRLQGGESEFKGVALLRTGSYY). The residue at position 165 (Glu-165) is a PolyADP-ribosyl glutamic acid. A GTP-binding site is contributed by Thr-186. Ser-188 carries the phosphoserine modification. ATP is bound at residue Ser-188. Tyr-190 carries the post-translational modification Phosphotyrosine. 2 residues coordinate Mg(2+): Glu-200 and Asp-202. Asp-202 contributes to the 2',3'-cGAMP binding site. Lys-206 is covalently cross-linked (Glycyl lysine isopeptide (Lys-Gly) (interchain with G-Cter in SUMO)). Lys-260 is covalently cross-linked (Glycyl lysine isopeptide (Lys-Gly) (interchain with G-Cter in ubiquitin)). The residue at position 261 (Glu-261) is a 5-glutamyl polyglutamate. Residues 268–278 (GVTVERKRRGS) carry the Nuclear localization signal motif. Phosphoserine is present on Ser-278. Asp-294 provides a ligand contact to GTP. Asp-294 is a binding site for Mg(2+). A 2',3'-cGAMP-binding site is contributed by Asp-294. The segment at 316 to 357 (SQWLGAKVKNNLKRQPFYLVPKHAKEGSGFQEETWRLSFSHI) is interaction with collided ribosomes. Lys-322 participates in a covalent cross-link: Glycyl lysine isopeptide (Lys-Gly) (interchain with G-Cter in SUMO); alternate. A Glycyl lysine isopeptide (Lys-Gly) (interchain with G-Cter in ubiquitin); alternate cross-link involves residue Lys-322. The 2',3'-cGAMP site is built by Lys-337 and Arg-351. 351 to 358 (RLSFSHIE) provides a ligand contact to GTP. Glu-358 contacts ATP. Lys-359 carries the post-translational modification N6-acetyllysine. Residue Lys-359 forms a Glycyl lysine isopeptide (Lys-Gly) (interchain with G-Cter in SUMO); alternate linkage. Lys-359 participates in a covalent cross-link: Glycyl lysine isopeptide (Lys-Gly) (interchain with G-Cter in ubiquitin); alternate. The DNA-binding stretch occupies residues 359-382 (KDILKNHGQSKTCCEIDGVKCCRK). His-365 provides a ligand contact to Zn(2+). At Lys-369 the chain carries N6-acetyllysine. Lys-369 is covalently cross-linked (Glycyl lysine isopeptide (Lys-Gly) (interchain with G-Cter in SUMO)). 3 residues coordinate Zn(2+): Cys-371, Cys-372, and Cys-379. Residues Cys-379 and Cys-380 are each lipidated (S-palmitoyl cysteine). Residues Lys-386, Lys-389, Lys-396, and Lys-397 each participate in a glycyl lysine isopeptide (Lys-Gly) (interchain with G-Cter in ubiquitin) cross-link. An N6-acetyllysine modification is found at Lys-389. Lys-389 contributes to the ATP binding site. Ser-410 carries the post-translational modification Phosphoserine. Residue 410–414 (SYHVK) coordinates ATP. The S-palmitoyl cysteine moiety is linked to residue Cys-449. An N6-methyllysine modification is found at Lys-481.

This sequence belongs to the mab-21 family. As to quaternary structure, monomer in the absence of DNA. Homodimer in presence of dsDNA: forms a 2:2 dimer with two enzymes binding to two DNA molecules. Interacts with nucleosomes; interaction is mainly mediated via histones H2A and H2B and inactivates the nucleotidyltransferase activity by blocking DNA-binding and subsequent activation. Interacts with PQBP1 (via WW domain). Interacts with TRIM14; this interaction recruits USP14, leading to deubiquitinate and stabilize CGAS and promote type I interferon production. Interacts with ZCCHC3; promoting sensing of dsDNA by CGAS. Interacts (when not monomethylated) with (poly-ADP-ribosylated) PARP1; interaction takes place in the nucleus and prevents the formation of the PARP1-TIMELESS complex. Interacts (when monomethylated) with SGF29; interaction with SGF29 prevents interaction with PARP1. Interacts with PCBP2; preventing the formation of liquid-like droplets in which CGAS is activated. Interacts with IRGM; promoting CGAS degradation. Mg(2+) serves as cofactor. It depends on Mn(2+) as a cofactor. Zn(2+) is required as a cofactor. In terms of processing, the N-terminal disordered part (1-134) is phosphorylated by AURKB during the G2-M transition, blocking CGAS liquid phase separation and preventing activation. Phosphorylation at Tyr-190 by BLK promotes cytosolic retention. Localizes into the nucleus following dephosphorylation at Tyr-190. Phosphorylation at Ser-410 activates the nucleotidyltransferase activity. Dephosphorylation at Ser-410 by PPP6C impairs its ability to bind GTP, thereby inactivating it. Phosphorylation at Ser-188 by PRKDC inhibits its cyclic GMP-AMP synthase activity by impairing homodimerization and activation. Phosphorylation at Ser-278 by AKT (AKT1, AKT2 or AKT3) suppresses the nucleotidyltransferase activity. Phosphorylation at Ser-278 by CDK1 during mitosis leads to its inhibition, thereby preventing CGAS activation by self-DNA during mitosis. Dephosphorylated at Ser-278 by protein phosphatase PP1 upon mitotic exit. Ubiquitinated at Lys-389 via 'Lys-48'-linked polyubiquitin chains, leading to its SQSTM1-mediated autophagic degradation. Interaction with TRIM14 promotes recruitment of USP14, leading to deubiquitinate Lys-389 and stabilize CGAS. Ubiquitinated at Lys-359 by RNF185 via 'Lys-27'-linked polyubiquitination, promoting CGAS cyclic GMP-AMP synthase activity. Monoubiquitination at Lys-322 by TRIM56 promotes oligomerization and subsequent activation. Monoubiquitination by TRIM41 promotes CGAS activation. Ubiquitination at Lys-260 via 'Lys-48'-linked polyubiquitination promotes its degradation. Deubiquitination at Lys-260 by USP29 promotes its stabilization. Deubiquitinated by USP27X, promoting its stabilization. Ubiquitinated at Lys-386 via 'Lys-63'-linked polyubiquitin chains by MARCHF8, leading to the inhibition of its DNA binding ability. In cycling cells, nucleosome-bound CGAS is ubiquitinated at Lys-396 and Lys-397 via 'Lys-48'-linked polyubiquitin chains by the ECS(SPSB3) complex, leading to its degradation: ubiquitination and degradation of nuclear CGAS during G1 and G2 phases is required to promote low intranuclear CGAS abundance before the next mitotic cycle. Post-translationally, sumoylated at Lys-206 by TRIM38 in uninfected cells and during the early phase of viral infection, promoting its stability by preventing ubiquitination at Lys-260 and subsequent degradation. Desumoylated by SENP2 during the late phase of viral infection. Sumoylation at Lys-322, Lys-359 and Lys-369 prevents DNA-binding, oligomerization and nucleotidyltransferase activity. Desumoylation at Lys-322, Lys-359 and Lys-369 by SENP7 relieves inhibition and activates CGAS. In terms of processing, polyglutamylated by TTLL6 at Glu-261, leading to impair DNA-binding activity. Deglutamylated by AGBL5/CCP5 and AGBL6/CCP6. Acetylation at Lys-359, Lys-369 and Lys-389 inhibits the cyclic GMP-AMP synthase activity. Deacetylated upon cytosolic DNA challenge such as viral infections. Acetylation by KAT5 increases the cyclic GMP-AMP synthase activity by promoting DNA-binding and subsequent activation. Post-translationally, proteolytically cleaved by apoptotic caspases during apoptosis, leading to its inactivation. The damage of the nucleus and the mitochondria during apoptosis leads to leakage of nuclear and mitochondrial DNA, which activate CGAS: cleavage and inactivation during apoptosis in required to prevent cytokine overproduction. Cleaved by CASP7 and CASP3 during virus-induced apoptosis, thereby inactivating it and preventing cytokine overproduction. Cleaved by CASP1 upon DNA virus infection; the cleavage impairs cGAMP production. Also cleaved by the pyroptotic CASP4 during non-canonical inflammasome activation; does not cut at the same sites than CASP1. In terms of processing, degraded via selective autophagy following interaction with IRGM. IRGM promotes CGAS recruitment to autophagosome membranes, promoting its SQSTM1/p62-dependent autophagic degradation. Poly-ADP-ribosylation at Glu-165 by PARP1 impairs DNA-binding, thereby preventing the cyclic GMP-AMP synthase activity. Post-translationally, palmitoylation at Cys-449 by ZDHHC18 impairs DNA-binding, thereby preventing the cyclic GMP-AMP synthase activity. Palmitoylation at Cys-379 and Cys-380 by ZDHHC9 promotes homodimerization and cyclic GMP-AMP synthase activity. Depalmitoylation at Cys-379 and Cys-380 by LYPLAL1 impairs homodimerization and cyclic GMP-AMP synthase activity. In terms of processing, monomethylated at Lys-481 by SETD7. Monomethylation promotes interaction with SGF29, preventing interaction between PARP1 nad SGF29. Demethylation by RIOX1 promotes interaction with PARP1, followed by PARP1 inactivation. Lactylation by AARS2 prevents ability to undergo liquid-liquid phase separation (LLPS), thereby inhibiting CGAS activation.

The protein resides in the nucleus. Its subcellular location is the chromosome. The protein localises to the cell membrane. It is found in the cytoplasm. It localises to the cytosol. It catalyses the reaction GTP + ATP = 2',3'-cGAMP + 2 diphosphate. The catalysed reaction is GTP + ATP = pppGp(2'-5')A + diphosphate. The enzyme catalyses pppGp(2'-5')A = 2',3'-cGAMP + diphosphate. With respect to regulation, the enzyme activity is strongly increased by double-stranded DNA (dsDNA), but not by single-stranded DNA or RNA. DNA-binding induces the formation of liquid-like droplets in which CGAS is activated. Liquid-like droplets also create a selective environment that restricts entry of negative regulators, such as TREX1 or BANF1/BAF, allowing sensing of DNA. A number of mechanisms exist to restrict its activity toward self-DNA. The nucleotidyltransferase activity is inhibited in the nucleus via its association with nucleosomes: interacts with the acidic patch of histones H2A and H2B, thereby blocking DNA-binding and subsequent activation. CGAS is also inactive when associated with mitotic chromatin. Chromatin-bound CGAS cannot be activated by exogenous DNA in mitotic cells: phosphorylation of the N-terminal disordered part by AURKB during the G2-M transition blocks CGAS liquid phase separation and activation. Activity toward self-DNA is inhibited by BANF1/BAF upon acute loss of nuclear membrane integrity: BANF1/BAF acts by outcompeting CGAS for DNA-binding, thereby preventing CGAS activation. DNA-induced activation at micronuclei is also limited by TREX1, which degrades micronuclear DNA upon nuclear envelope rupture, thereby preventing CGAS activation. CGAS can be released from nucleosomes and activated by MRE11 component of the MRN complex, which displaces CGAS from acidic-patch-mediated sequestration. Acetylation at Lys-359, Lys-369 and Lys-389 inhibits the cyclic GMP-AMP synthase activity. Acetylation by KAT5 increases the cyclic GMP-AMP synthase activity by promoting DNA-binding and subsequent activation. Phosphorylation at Ser-278 suppresses the nucleotidyltransferase activity. Phosphorylation at Ser-410 promotes the cyclic GMP-AMP synthase activity. Phosphorylation at Ser-188 inhibits its cyclic GMP-AMP synthase activity. Ubiquitination at Lys-359 via 'Lys-27'-linked polyubiquitination enhances the cyclic GMP-AMP synthase activity. Monoubiquitination at Lys-322 promotes oligomerization and subsequent activation. Sumoylation at Lys-322, Lys-359 and Lys-369 prevents DNA-binding, oligomerization and nucleotidyltransferase activity. The enzyme activity is impaired by the cleavage by CASP1. In addition to DNA, also activated by collided ribosomes upon translation stress: specifically binds collided ribosomes, promoting its activation and triggering type-I interferon production. Nucleotidyltransferase that catalyzes the formation of cyclic GMP-AMP (2',3'-cGAMP) from ATP and GTP and plays a key role in innate immunity. Catalysis involves both the formation of a 2',5' phosphodiester linkage at the GpA step and the formation of a 3',5' phosphodiester linkage at the ApG step, producing c[G(2',5')pA(3',5')p]. Acts as a key DNA sensor: directly binds double-stranded DNA (dsDNA), inducing the formation of liquid-like droplets in which CGAS is activated, leading to synthesis of 2',3'-cGAMP, a second messenger that binds to and activates STING1, thereby triggering type-I interferon production. Preferentially binds long dsDNA (around 45 bp) and forms ladder-like networks that function cooperatively to stabilize individual cGAS-dsDNA complexes. Acts as a key foreign DNA sensor, the presence of double-stranded DNA (dsDNA) in the cytoplasm being a danger signal that triggers the immune responses. Has antiviral activity by sensing the presence of dsDNA from DNA viruses in the cytoplasm. Also acts as an innate immune sensor of infection by retroviruses by detecting the presence of reverse-transcribed DNA in the cytosol. Detection of retroviral reverse-transcribed DNA in the cytosol may be indirect and be mediated via interaction with PQBP1, which directly binds reverse-transcribed retroviral DNA. Also detects the presence of DNA from bacteria. 2',3'-cGAMP can be transferred from producing cells to neighboring cells through gap junctions, leading to promote STING1 activation and convey immune response to connecting cells. 2',3'-cGAMP can also be transferred between cells by virtue of packaging within viral particles contributing to IFN-induction in newly infected cells in a cGAS-independent but STING1-dependent manner. Also senses the presence of neutrophil extracellular traps (NETs) that are translocated to the cytosol following phagocytosis, leading to synthesis of 2',3'-cGAMP. In addition to foreign DNA, can also be activated by endogenous nuclear or mitochondrial DNA. When self-DNA leaks into the cytosol during cellular stress (such as mitochondrial stress, DNA damage, mitotic arrest or senescence), or is present in form of cytosolic micronuclei, CGAS is activated leading to a state of sterile inflammation. Acts as a regulator of cellular senescence by binding to cytosolic chromatin fragments that are present in senescent cells, leading to trigger type-I interferon production via STING1 and promote cellular senescence. Also involved in the inflammatory response to genome instability and double-stranded DNA breaks: acts by localizing to micronuclei arising from genome instability. Micronuclei, which are frequently found in cancer cells, consist of chromatin surrounded by their own nuclear membrane: following breakdown of the micronuclear envelope, a process associated with chromothripsis, CGAS binds self-DNA exposed to the cytosol, leading to 2',3'-cGAMP synthesis and subsequent activation of STING1 and type-I interferon production. In a healthy cell, CGAS is however kept inactive even in cellular events that directly expose it to self-DNA, such as mitosis, when cGAS associates with chromatin directly after nuclear envelope breakdown or remains in the form of postmitotic persistent nuclear cGAS pools bound to chromatin. Nuclear CGAS is inactivated by chromatin via direct interaction with nucleosomes, which block CGAS from DNA binding and thus prevent CGAS-induced autoimmunity. Also acts as a suppressor of DNA repair in response to DNA damage: inhibits homologous recombination repair by interacting with PARP1, the CGAS-PARP1 interaction leading to impede the formation of the PARP1-TIMELESS complex. In addition to DNA, also sense translation stress: in response to translation stress, translocates to the cytosol and associates with collided ribosomes, promoting its activation and triggering type-I interferon production. The protein is Cyclic GMP-AMP synthase of Sus scrofa (Pig).